The following is a 502-amino-acid chain: Mannitol 2-dehydrogenase (502 aa).

37–48 (IVHIGVGGFHRA) is a binding site for NAD(+).

Belongs to the mannitol dehydrogenase family. As to quaternary structure, monomer.

The enzyme catalyses D-mannitol + NAD(+) = D-fructose + NADH + H(+). Its function is as follows. Catalyzes the NAD(H)-dependent interconversion of D-fructose and D-mannitol in the mannitol metabolic pathway. In Aspergillus fumigatus (strain CBS 144.89 / FGSC A1163 / CEA10) (Neosartorya fumigata), this protein is Mannitol 2-dehydrogenase.